Reading from the N-terminus, the 947-residue chain is Probable outer membrane protein pmp19 (947 aa).

Residues 1 to 19 (MKQMRLWGFLFLSSFCQVS) form the signal peptide. The Autotransporter domain occupies 672-947 (IPLQHLCVFG…NAHAGLSLSF (276 aa)).

It belongs to the PMP outer membrane protein family.

The protein resides in the secreted. It localises to the cell wall. It is found in the cell outer membrane. This Chlamydia pneumoniae (Chlamydophila pneumoniae) protein is Probable outer membrane protein pmp19 (pmp19).